Here is a 429-residue protein sequence, read N- to C-terminus: UPF0761 membrane protein ABO_1543 (429 aa).

The next 6 helical transmembrane spans lie at 45–65 (LFAI…VPAL), 102–122 (LTVL…STVE), 141–161 (LLMY…GLAI), 184–204 (WLAV…YTVV), 216–236 (LGAA…TFFI), and 256–278 (LLWI…ALVV).

This sequence belongs to the UPF0761 family.

The protein localises to the cell inner membrane. This Alcanivorax borkumensis (strain ATCC 700651 / DSM 11573 / NCIMB 13689 / SK2) protein is UPF0761 membrane protein ABO_1543.